Here is a 181-residue protein sequence, read N- to C-terminus: MKQTILARRYAKAVFSIGADSGKYGEYNDALQAVANLYMTNPDVVDALTNPLYPLELREKVMVGIVKSMDIDAVMSNFLNLLVEKKRAEILPEIAEEFQAMVDDAQNLSHGSVISAVELSEELQGKIQQTLEKLTGKKVELTTSVDPSIIGGIVAKVGDLVLDGSIKTQLAGLKESIKGRE.

The protein belongs to the ATPase delta chain family. In terms of assembly, F-type ATPases have 2 components, F(1) - the catalytic core - and F(0) - the membrane proton channel. F(1) has five subunits: alpha(3), beta(3), gamma(1), delta(1), epsilon(1). F(0) has three main subunits: a(1), b(2) and c(10-14). The alpha and beta chains form an alternating ring which encloses part of the gamma chain. F(1) is attached to F(0) by a central stalk formed by the gamma and epsilon chains, while a peripheral stalk is formed by the delta and b chains.

It localises to the cell inner membrane. Functionally, f(1)F(0) ATP synthase produces ATP from ADP in the presence of a proton or sodium gradient. F-type ATPases consist of two structural domains, F(1) containing the extramembraneous catalytic core and F(0) containing the membrane proton channel, linked together by a central stalk and a peripheral stalk. During catalysis, ATP synthesis in the catalytic domain of F(1) is coupled via a rotary mechanism of the central stalk subunits to proton translocation. This protein is part of the stalk that links CF(0) to CF(1). It either transmits conformational changes from CF(0) to CF(1) or is implicated in proton conduction. This chain is ATP synthase subunit delta, found in Desulfotalea psychrophila (strain LSv54 / DSM 12343).